The following is a 155-amino-acid chain: MSKITEQVEVIVQPIMEDLNFELVDVEYVKEGRDHFLRISIDKEGGVDLNDCTLASEKISEAMDANDPIPEMYYLDVASPGAERPIKKEQDFQNAITKPVFVSLYVPIEGEKEWLGILQEVNNETIVVQVKIKARTKDIEIPRDKIAKARHAVMI.

The protein belongs to the RimP family.

The protein localises to the cytoplasm. In terms of biological role, required for maturation of 30S ribosomal subunits. The chain is Ribosome maturation factor RimP from Staphylococcus aureus (strain JH9).